The primary structure comprises 122 residues: MARNVTKRNKRCRGHQKAIYKKKSHSSSESGLRNYSLYINRVLKEVVPQKGISSRTIDIINTMINDMFERISTEACNLMYYRKRCTLTPEDIEKAVYLLLPEKLAKYAVAFGKEAVQRYVRS.

Positions 1 to 25 (MARNVTKRNKRCRGHQKAIYKKKSH) are enriched in basic residues. The segment at 1 to 30 (MARNVTKRNKRCRGHQKAIYKKKSHSSSES) is disordered.

This sequence belongs to the histone H2B family. As to expression, testis-specific. Restricted to the spermatid population of seminiferous epithelium. Not present in Sertoli cells, spermatogonia, spermatocytes or cells of the interstitial tissue (at protein level).

It is found in the cytoplasm. May act as an acrosome-nuclear docking protein in sperm. This Bos taurus (Bovine) protein is Histone H2B subacrosomal variant (SUBH2BV).